The chain runs to 526 residues: Variant surface glycoprotein MITAT 1.4A (526 aa).

The signal sequence occupies residues 1–33 (MDCHTKETLGVTQWRRSTMLTLSLLYAITPADG). 2 disulfides stabilise this stretch: C47/C173 and C154/C215. Residues 157–193 (NEGGDGDGKDQLAPKGCRHGTEADFDAGAGPAESEVA) form a disordered region. Residue N453 is glycosylated (N-linked (GlcNAc...) asparagine). D503 carries GPI-anchor amidated aspartate lipidation. A propeptide spans 504–526 (SSILVTKKFALTVVSAAFVALLF) (removed in mature form).

The protein resides in the cell membrane. Functionally, VSG forms a coat on the surface of the parasite. The trypanosome evades the immune response of the host by expressing a series of antigenically distinct VSGs from an estimated 1000 VSG genes. The polypeptide is Variant surface glycoprotein MITAT 1.4A (Trypanosoma brucei brucei).